A 411-amino-acid chain; its full sequence is Putative metal tolerance protein C3 (411 aa).

Residues methionine 1–leucine 115 lie on the Cytoplasmic side of the membrane. Residues alanine 116–valine 136 form a helical membrane-spanning segment. At lysine 137 to serine 140 the chain is on the vacuolar side. A helical membrane pass occupies residues isoleucine 141–tryptophan 161. Topologically, residues phenylalanine 162–proline 184 are cytoplasmic. The chain crosses the membrane as a helical span at residues valine 185–alanine 205. Residues alanine 206–glutamine 222 lie on the Vacuolar side of the membrane. Residues leucine 223 to tyrosine 243 form a helical membrane-spanning segment. The Cytoplasmic segment spans residues cysteine 244–aspartate 262. The helical transmembrane segment at valine 263–leucine 283 threads the bilayer. The Vacuolar segment spans residues aspartate 284 to glycine 287. A helical transmembrane segment spans residues alanine 288–valine 308. The Cytoplasmic portion of the chain corresponds to serine 309–histidine 390.

It belongs to the cation diffusion facilitator (CDF) transporter (TC 2.A.4) family.

The protein resides in the vacuole membrane. In terms of biological role, involved in sequestration of excess metal in the cytoplasm into vacuoles to maintain metal homeostasis. In Arabidopsis thaliana (Mouse-ear cress), this protein is Putative metal tolerance protein C3 (MTPC3).